A 160-amino-acid chain; its full sequence is SsrA-binding protein (160 aa).

The disordered stretch occupies residues 136 to 160; sequence KRHVEKERDANREVQRAMRSKGKDD.

The protein belongs to the SmpB family.

The protein resides in the cytoplasm. In terms of biological role, required for rescue of stalled ribosomes mediated by trans-translation. Binds to transfer-messenger RNA (tmRNA), required for stable association of tmRNA with ribosomes. tmRNA and SmpB together mimic tRNA shape, replacing the anticodon stem-loop with SmpB. tmRNA is encoded by the ssrA gene; the 2 termini fold to resemble tRNA(Ala) and it encodes a 'tag peptide', a short internal open reading frame. During trans-translation Ala-aminoacylated tmRNA acts like a tRNA, entering the A-site of stalled ribosomes, displacing the stalled mRNA. The ribosome then switches to translate the ORF on the tmRNA; the nascent peptide is terminated with the 'tag peptide' encoded by the tmRNA and targeted for degradation. The ribosome is freed to recommence translation, which seems to be the essential function of trans-translation. The protein is SsrA-binding protein of Ectopseudomonas mendocina (strain ymp) (Pseudomonas mendocina).